A 179-amino-acid chain; its full sequence is Large ribosomal subunit protein uL5 (179 aa).

It belongs to the universal ribosomal protein uL5 family. As to quaternary structure, part of the 50S ribosomal subunit; part of the 5S rRNA/L5/L18/L25 subcomplex. Contacts the 5S rRNA and the P site tRNA. Forms a bridge to the 30S subunit in the 70S ribosome.

This is one of the proteins that bind and probably mediate the attachment of the 5S RNA into the large ribosomal subunit, where it forms part of the central protuberance. In the 70S ribosome it contacts protein S13 of the 30S subunit (bridge B1b), connecting the 2 subunits; this bridge is implicated in subunit movement. Contacts the P site tRNA; the 5S rRNA and some of its associated proteins might help stabilize positioning of ribosome-bound tRNAs. In Glaesserella parasuis serovar 5 (strain SH0165) (Haemophilus parasuis), this protein is Large ribosomal subunit protein uL5.